The chain runs to 229 residues: 5'-methylthioadenosine/S-adenosylhomocysteine nucleosidase (229 aa).

The Proton acceptor role is filled by E12. Residues G78, I152, and 173–174 (ME) each bind substrate. The Proton donor role is filled by D197.

The protein belongs to the PNP/UDP phosphorylase family. MtnN subfamily.

It catalyses the reaction S-adenosyl-L-homocysteine + H2O = S-(5-deoxy-D-ribos-5-yl)-L-homocysteine + adenine. The enzyme catalyses S-methyl-5'-thioadenosine + H2O = 5-(methylsulfanyl)-D-ribose + adenine. The catalysed reaction is 5'-deoxyadenosine + H2O = 5-deoxy-D-ribose + adenine. Its pathway is amino-acid biosynthesis; L-methionine biosynthesis via salvage pathway; S-methyl-5-thio-alpha-D-ribose 1-phosphate from S-methyl-5'-thioadenosine (hydrolase route): step 1/2. Functionally, catalyzes the irreversible cleavage of the glycosidic bond in both 5'-methylthioadenosine (MTA) and S-adenosylhomocysteine (SAH/AdoHcy) to adenine and the corresponding thioribose, 5'-methylthioribose and S-ribosylhomocysteine, respectively. Also cleaves 5'-deoxyadenosine, a toxic by-product of radical S-adenosylmethionine (SAM) enzymes, into 5-deoxyribose and adenine. The chain is 5'-methylthioadenosine/S-adenosylhomocysteine nucleosidase from Pasteurella multocida (strain Pm70).